Reading from the N-terminus, the 427-residue chain is tRNA pseudouridine synthase Pus10 (427 aa).

The active-site Nucleophile is the D240. Substrate contacts are provided by Y306 and Y378.

This sequence belongs to the pseudouridine synthase Pus10 family.

The enzyme catalyses uridine(54) in tRNA = pseudouridine(54) in tRNA. It catalyses the reaction uridine(55) in tRNA = pseudouridine(55) in tRNA. Its function is as follows. Responsible for synthesis of pseudouridine from uracil-54 and uracil-55 in the psi GC loop of transfer RNAs. The sequence is that of tRNA pseudouridine synthase Pus10 from Halorubrum lacusprofundi (strain ATCC 49239 / DSM 5036 / JCM 8891 / ACAM 34).